The primary structure comprises 403 residues: Serine/threonine-protein phosphatase 4 regulatory subunit 2-A (403 aa).

Composition is skewed to polar residues over residues glutamate 140–arginine 149, proline 156–glycine 170, and serine 183–serine 196. The disordered stretch occupies residues glutamate 140–aspartate 403. The segment covering threonine 197 to glutamine 211 has biased composition (basic and acidic residues). Polar residues-rich tracts occupy residues serine 212–serine 226 and alanine 371–glutamate 387. The segment covering asparagine 388–aspartate 403 has biased composition (acidic residues).

Belongs to the PPP4R2 family. Serine/threonine-protein phosphatase 4 (PP4) occurs in different assemblies of the catalytic and one or more regulatory subunits.

In terms of biological role, regulatory subunit of serine/threonine-protein phosphatase 4 (PP4). The sequence is that of Serine/threonine-protein phosphatase 4 regulatory subunit 2-A (ppp4r2-a) from Xenopus laevis (African clawed frog).